We begin with the raw amino-acid sequence, 592 residues long: Inactive metallocarboxypeptidase ecm14 (592 aa).

An N-terminal signal peptide occupies residues 1–22; the sequence is MYRQDHVFVVLCAVLLAGQVTA. Positions 23–175 are excised as a propeptide; that stretch reads VPAGTGINPH…AIYESRYPTR (153 aa). Residues 203 to 524 enclose the Peptidase M14 domain; the sequence is HYQPFNVILQ…NSVLVLGHFL (322 aa). Zn(2+)-binding residues include His-267 and Glu-270. Substrate is bound by residues 267–270, Arg-325, and 342–343; these read HARE and DR. Cysteines 336 and 359 form a disulfide. An N-linked (GlcNAc...) asparagine glycan is attached at Asn-383. His-399 serves as a coordination point for Zn(2+). 400–401 contacts substrate; sequence SY. Asn-548 carries N-linked (GlcNAc...) asparagine glycosylation.

It belongs to the peptidase M14 family. Zn(2+) serves as cofactor.

It localises to the vacuole. Its subcellular location is the secreted. In terms of biological role, inactive carboxypeptidase that may play a role in cell wall organization and biogenesis. The protein is Inactive metallocarboxypeptidase ecm14 (ecm14) of Talaromyces stipitatus (strain ATCC 10500 / CBS 375.48 / QM 6759 / NRRL 1006) (Penicillium stipitatum).